The chain runs to 314 residues: Lipoyl synthase (314 aa).

Residues cysteine 55, cysteine 60, cysteine 66, cysteine 81, cysteine 85, cysteine 88, and serine 292 each contribute to the [4Fe-4S] cluster site. Residues 67–281 (WEDREATFLI…TQYAEGLGFS (215 aa)) form the Radical SAM core domain.

Belongs to the radical SAM superfamily. Lipoyl synthase family. [4Fe-4S] cluster serves as cofactor.

It localises to the cytoplasm. It catalyses the reaction [[Fe-S] cluster scaffold protein carrying a second [4Fe-4S](2+) cluster] + N(6)-octanoyl-L-lysyl-[protein] + 2 oxidized [2Fe-2S]-[ferredoxin] + 2 S-adenosyl-L-methionine + 4 H(+) = [[Fe-S] cluster scaffold protein] + N(6)-[(R)-dihydrolipoyl]-L-lysyl-[protein] + 4 Fe(3+) + 2 hydrogen sulfide + 2 5'-deoxyadenosine + 2 L-methionine + 2 reduced [2Fe-2S]-[ferredoxin]. The protein operates within protein modification; protein lipoylation via endogenous pathway; protein N(6)-(lipoyl)lysine from octanoyl-[acyl-carrier-protein]: step 2/2. In terms of biological role, catalyzes the radical-mediated insertion of two sulfur atoms into the C-6 and C-8 positions of the octanoyl moiety bound to the lipoyl domains of lipoate-dependent enzymes, thereby converting the octanoylated domains into lipoylated derivatives. The protein is Lipoyl synthase of Mycobacterium leprae (strain Br4923).